Reading from the N-terminus, the 310-residue chain is Homoserine O-acetyltransferase (310 aa).

The active-site Acyl-thioester intermediate is the cysteine 142. Substrate is bound by residues lysine 163 and serine 192. Histidine 235 (proton acceptor) is an active-site residue. Glutamate 237 is an active-site residue. Arginine 249 contacts substrate.

Belongs to the MetA family.

Its subcellular location is the cytoplasm. The catalysed reaction is L-homoserine + acetyl-CoA = O-acetyl-L-homoserine + CoA. The protein operates within amino-acid biosynthesis; L-methionine biosynthesis via de novo pathway; O-acetyl-L-homoserine from L-homoserine: step 1/1. Functionally, transfers an acetyl group from acetyl-CoA to L-homoserine, forming acetyl-L-homoserine. The protein is Homoserine O-acetyltransferase of Parabacteroides distasonis (strain ATCC 8503 / DSM 20701 / CIP 104284 / JCM 5825 / NCTC 11152).